A 329-amino-acid chain; its full sequence is Biotin synthase (329 aa).

Positions 46–275 constitute a Radical SAM core domain; that stretch reads YYGNKVKLNM…TKEIRISGGR (230 aa). Cys64, Cys68, and Cys71 together coordinate [4Fe-4S] cluster. 4 residues coordinate [2Fe-2S] cluster: Cys108, Cys140, Cys200, and Arg270.

Belongs to the radical SAM superfamily. Biotin synthase family. Homodimer. [4Fe-4S] cluster serves as cofactor. Requires [2Fe-2S] cluster as cofactor.

The enzyme catalyses (4R,5S)-dethiobiotin + (sulfur carrier)-SH + 2 reduced [2Fe-2S]-[ferredoxin] + 2 S-adenosyl-L-methionine = (sulfur carrier)-H + biotin + 2 5'-deoxyadenosine + 2 L-methionine + 2 oxidized [2Fe-2S]-[ferredoxin]. It functions in the pathway cofactor biosynthesis; biotin biosynthesis; biotin from 7,8-diaminononanoate: step 2/2. Its function is as follows. Catalyzes the conversion of dethiobiotin (DTB) to biotin by the insertion of a sulfur atom into dethiobiotin via a radical-based mechanism. This is Biotin synthase from Anoxybacillus flavithermus (strain DSM 21510 / WK1).